Consider the following 489-residue polypeptide: Argininosuccinate lyase (489 aa).

Residues 462–489 are disordered; sequence QARYQQTEPAEEPPLPPSSPGSGLPLES.

This sequence belongs to the lyase 1 family. Argininosuccinate lyase subfamily.

The protein resides in the cytoplasm. It catalyses the reaction 2-(N(omega)-L-arginino)succinate = fumarate + L-arginine. The protein operates within amino-acid biosynthesis; L-arginine biosynthesis; L-arginine from L-ornithine and carbamoyl phosphate: step 3/3. The sequence is that of Argininosuccinate lyase from Synechococcus sp. (strain JA-3-3Ab) (Cyanobacteria bacterium Yellowstone A-Prime).